A 496-amino-acid polypeptide reads, in one-letter code: Probable cytosol aminopeptidase (496 aa).

The Mn(2+) site is built by Lys-257 and Asp-262. Lys-269 is a catalytic residue. The Mn(2+) site is built by Asp-281, Asp-341, and Glu-343. Residue Arg-345 is part of the active site.

Belongs to the peptidase M17 family. Mn(2+) serves as cofactor.

The protein localises to the cytoplasm. The enzyme catalyses Release of an N-terminal amino acid, Xaa-|-Yaa-, in which Xaa is preferably Leu, but may be other amino acids including Pro although not Arg or Lys, and Yaa may be Pro. Amino acid amides and methyl esters are also readily hydrolyzed, but rates on arylamides are exceedingly low.. The catalysed reaction is Release of an N-terminal amino acid, preferentially leucine, but not glutamic or aspartic acids.. In terms of biological role, presumably involved in the processing and regular turnover of intracellular proteins. Catalyzes the removal of unsubstituted N-terminal amino acids from various peptides. This Synechococcus sp. (strain CC9311) protein is Probable cytosol aminopeptidase.